Here is a 448-residue protein sequence, read N- to C-terminus: Omega-6 fatty acid desaturase, chloroplastic (448 aa).

The N-terminal 69 residues, 1-69, are a transit peptide targeting the chloroplast; sequence MASRIADSLF…VKRRIGCIKA (69 aa). Val70 carries the post-translational modification N-acetylvaline. The next 2 membrane-spanning stretches (helical) occupy residues 124-144 and 149-169; these read LKAL…LFMI and WYLL…FFVI. Residues 171 to 175 carry the Histidine box-1 motif; that stretch reads HDCAH. Residues 207 to 211 carry the Histidine box-2 motif; it reads HDRHH. The next 2 helical transmembrane spans lie at 282–302 and 303–323; these read VFAF…ILGW and VKFW…FTMV. Positions 367-371 match the Histidine box-3 motif; that stretch reads HIPHH.

It belongs to the fatty acid desaturase type 1 family.

It is found in the plastid. Its subcellular location is the chloroplast inner membrane. It carries out the reaction a (9Z)-octadecenoyl-containing glycerolipid + 2 reduced [2Fe-2S]-[ferredoxin] + O2 + 2 H(+) = a (9Z,12Z)-octadecadienoyl-containing glycerolipid + 2 oxidized [2Fe-2S]-[ferredoxin] + 2 H2O. It participates in lipid metabolism; polyunsaturated fatty acid biosynthesis. Functionally, chloroplast omega-6 fatty acid desaturase introduces the second double bond in the biosynthesis of 16:3 and 18:3 fatty acids, important constituents of plant membranes. It is thought to use ferredoxin as an electron donor and to act on fatty acids esterified to galactolipids, sulfolipids and phosphatidylglycerol. The protein is Omega-6 fatty acid desaturase, chloroplastic of Arabidopsis thaliana (Mouse-ear cress).